Here is a 202-residue protein sequence, read N- to C-terminus: LexA repressor (202 aa).

A DNA-binding region (H-T-H motif) is located at residues 28 to 48; sequence RAEIAQRLGFRSPNAAEEHLK. Residues serine 119 and lysine 156 each act as for autocatalytic cleavage activity in the active site.

Belongs to the peptidase S24 family. As to quaternary structure, homodimer.

It carries out the reaction Hydrolysis of Ala-|-Gly bond in repressor LexA.. Its function is as follows. Represses a number of genes involved in the response to DNA damage (SOS response), including recA and lexA. Binds to the 16 bp palindromic sequence 5'-CTGTATATATATACAG-3'. In the presence of single-stranded DNA, RecA interacts with LexA causing an autocatalytic cleavage which disrupts the DNA-binding part of LexA, leading to derepression of the SOS regulon and eventually DNA repair. In Yersinia pseudotuberculosis serotype O:1b (strain IP 31758), this protein is LexA repressor.